The chain runs to 500 residues: MQMNSVWKLSLGLLLLSSVIGSFAELDFGHCETLVKKWADSSSSREEHVNKDKRSLKDLLFFLHVPRTGGRTYFHCFLRKLYDSSEECPRSYDKLHFNPRKEKCKLLATHDDYSLMAKLPRERTSVMTIVRDPIARVLSTYEFSVEVAARFLVHPNLTSASRMSSRIRKSNVISTLDIWPWKYLVPWMREDLFARRDARKLKEVVIIEDDNPYDMEEMLMPLHKYLDAPTAHDIIHNGATFQIAGLTNNSHLSEAHEVRHCVQKFKSLGESVLQVAKRRLDSMLYVGLTEEHRESASLFANVVGSQVLSQVVPSNATAKIKALKSEASVTISETGSDKSNIQNGTSEVTLNKAEAKSGNMTVKTLMEVYEGCITHLRKSQGTRRVNSLKRITPANFTRGTRTRVPKEVIQQIKSLNNLDVELYKYAKVIFAKEHELVSNKLISSSKRSIVDLPSELKSVLGEMGEEKLWKFVPVALMLLLIVLFFLFVNAKRRRTSKVKI.

Positions 1–24 (MQMNSVWKLSLGLLLLSSVIGSFA) are cleaved as a signal peptide. Residues 25–467 (ELDFGHCETL…SVLGEMGEEK (443 aa)) are Lumenal-facing. Catalysis depends on residues R121 and E142. Residues N156, N248, N315, N343, N359, and N395 are each glycosylated (N-linked (GlcNAc...) asparagine). Residues 468–488 (LWKFVPVALMLLLIVLFFLFV) traverse the membrane as a helical segment. The Cytoplasmic segment spans residues 489–500 (NAKRRRTSKVKI).

Expressed throughout the plant body, highest levels of expression are in the root apical meristem.

It is found in the golgi apparatus membrane. It carries out the reaction L-tyrosyl-[protein] + 3'-phosphoadenylyl sulfate = O-sulfo-L-tyrosine-[protein] + adenosine 3',5'-bisphosphate + H(+). In terms of biological role, catalyzes the O-sulfation of tyrosine residues within acidic motifs of polypeptides. The protein is Protein-tyrosine sulfotransferase (TPST) of Arabidopsis thaliana (Mouse-ear cress).